The sequence spans 372 residues: Chaperone protein DnaJ (372 aa).

A J domain is found at 5–70; the sequence is DYYELLEISR…EKKSIYDRYG (66 aa). The segment at 134–211 adopts a CR-type zinc-finger fold; the sequence is GCNKEINYKY…CKGTGYEEVK (78 aa). Zn(2+)-binding residues include C147, C150, C163, C166, C185, C188, C199, and C202. CXXCXGXG motif repeat units lie at residues 147 to 154, 163 to 170, 185 to 192, and 199 to 206; these read CKPCEGTG, CPTCKGQG, CPRCGGTG, and CKSCKGTG.

The protein belongs to the DnaJ family. Homodimer. Requires Zn(2+) as cofactor.

It localises to the cytoplasm. Functionally, participates actively in the response to hyperosmotic and heat shock by preventing the aggregation of stress-denatured proteins and by disaggregating proteins, also in an autonomous, DnaK-independent fashion. Unfolded proteins bind initially to DnaJ; upon interaction with the DnaJ-bound protein, DnaK hydrolyzes its bound ATP, resulting in the formation of a stable complex. GrpE releases ADP from DnaK; ATP binding to DnaK triggers the release of the substrate protein, thus completing the reaction cycle. Several rounds of ATP-dependent interactions between DnaJ, DnaK and GrpE are required for fully efficient folding. Also involved, together with DnaK and GrpE, in the DNA replication of plasmids through activation of initiation proteins. This chain is Chaperone protein DnaJ, found in Aliarcobacter butzleri (strain RM4018) (Arcobacter butzleri).